The sequence spans 273 residues: Nicotinamide N-methyltransferase (273 aa).

S-adenosyl-L-methionine contacts are provided by residues Y35, Y40, 74 to 75, Y80, D96, N101, and 152 to 153; these read GA and NV.

It belongs to the class I-like SAM-binding methyltransferase superfamily. NNMT/PNMT/TEMT family.

The catalysed reaction is nicotinamide + S-adenosyl-L-methionine = 1-methylnicotinamide + S-adenosyl-L-homocysteine. Catalyzes the N-methylation of nicotinamide and other pyridines to form pyridinium ions. Involved in regulation of lifespan extension downstream of the sirtuin sir-2.1, probably through its role in nicotinic acid metabolism. This Caenorhabditis elegans protein is Nicotinamide N-methyltransferase.